The sequence spans 790 residues: Spermatogenesis-associated protein 20 (790 aa).

The span at 1–19 shows a compositional bias: basic residues; that stretch reads MSHHSSPPPKHKGEHKGHG. The disordered stretch occupies residues 1 to 67; the sequence is MSHHSSPPPK…PPPAPPKTVN (67 aa). At Ser5 the chain carries Phosphoserine. Over residues 23-36 the composition is skewed to basic and acidic residues; that stretch reads GSERGSSSRDKDRS. Ser653 is subject to Phosphoserine.

The protein resides in the secreted. May play a role in fertility regulation. This is Spermatogenesis-associated protein 20 (Spata20) from Mus musculus (Mouse).